We begin with the raw amino-acid sequence, 93 residues long: MPRSLKKGPFVDEHLFRKVVAANEANSKNVIKTWSRRSMIVPAMLGHTIAVHDGRKHIPVFVTETMVGHKLGEFAPTRTFRGHVKDDKRGRRR.

This sequence belongs to the universal ribosomal protein uS19 family.

Its function is as follows. Protein S19 forms a complex with S13 that binds strongly to the 16S ribosomal RNA. This chain is Small ribosomal subunit protein uS19, found in Leifsonia xyli subsp. xyli (strain CTCB07).